A 59-amino-acid chain; its full sequence is Light-harvesting protein B-800-850 alpha chain E (59 aa).

Topologically, residues 1–11 (MNQGRIWTVVK) are cytoplasmic. Residues 12 to 35 (PTVGLPLLLGSVTVIAILVHFAVL) form a helical membrane-spanning segment. An a bacteriochlorophyll-binding site is contributed by H31. The Periplasmic segment spans residues 36–59 (SNTTWFSKYWNGKAAAIESSVSIG).

This sequence belongs to the antenna complex alpha subunit family. As to quaternary structure, the core complex is formed by different alpha and beta chains, binding bacteriochlorophyll molecules, and arranged most probably in tetrameric structures disposed around the reaction center. The non-pigmented gamma chains may constitute additional components.

It is found in the cell inner membrane. Functionally, antenna complexes are light-harvesting systems, which transfer the excitation energy to the reaction centers. The sequence is that of Light-harvesting protein B-800-850 alpha chain E (pucAE) from Rhodopseudomonas palustris (strain ATCC BAA-98 / CGA009).